The following is a 1051-amino-acid chain: Integrin alpha-3 (1051 aa).

The first 32 residues, 1–32, serve as a signal peptide directing secretion; sequence MGPGPRCAPGDPGWMLGALALMVAASGRFAFA. Residues 33-991 are Extracellular-facing; that stretch reads FNLDTRFLVV…LVEELPAEIE (959 aa). FG-GAP repeat units lie at residues 38 to 103, 110 to 171, 185 to 235, 236 to 292, 293 to 354, 356 to 411, and 415 to 477; these read RFLV…KDDC, EKSD…DLQL, CNSN…WDLS, EYSY…GGDL, KRKQ…TSFP, QPSL…GLLR, and QIVH…VARP. Asn-86 is a glycosylation site (N-linked (GlcNAc...) asparagine). Cystine bridges form between Cys-94–Cys-103, Cys-140–Cys-162, and Cys-185–Cys-197. Ca(2+)-binding residues include Asp-315, Asn-317, Asp-319, Asp-323, Asp-378, Asn-380, Asp-382, Asp-386, Asp-439, Asp-441, Asn-443, Tyr-445, and Asp-447. 2 cysteine pairs are disulfide-bonded: Cys-485/Cys-490 and Cys-496/Cys-550. N-linked (GlcNAc...) asparagine glycans are attached at residues Asn-500, Asn-511, Asn-573, and Asn-605. The cysteines at positions 615 and 621 are disulfide-linked. N-linked (GlcNAc...) asparagine glycosylation is found at Asn-656, Asn-697, and Asn-841. Cys-694 and Cys-702 form a disulfide bridge. Intrachain disulfides connect Cys-846-Cys-904 and Cys-911-Cys-916. The interval 860–888 is disordered; sequence LSDPGDKPHSPQRRRRQLDPGGDQGSPPV. N-linked (GlcNAc...) asparagine glycosylation is found at Asn-923, Asn-926, Asn-935, and Asn-969. Residues 992–1019 traverse the membrane as a helical segment; it reads LWLVLVAVSAGLLLLGLIIILLWKCGFF. A GFFKR motif motif is present at residues 1017-1021; the sequence is GFFKR. Residues 1020–1051 are Cytoplasmic-facing; it reads KRARTRALYEAKRQKAEMKSQPSETERLTDDY.

Belongs to the integrin alpha chain family. Heterodimer of an alpha and a beta subunit. The alpha subunit is composed of a heavy and a light chain linked by a disulfide bond. Alpha-3 associates with beta-1. Interacts with HPS5. Interacts with FAP (seprase); the interaction occurs at the cell surface of invadopodia membrane in a collagen-dependent manner. In terms of processing, isoform 1, but not isoform 2, is phosphorylated on serine residues.

It is found in the cell membrane. The protein localises to the cell projection. Its subcellular location is the invadopodium membrane. It localises to the filopodium membrane. Integrin alpha-3/beta-1 is a receptor for fibronectin, laminin, collagen, epiligrin, thrombospondin and CSPG4. Integrin alpha-3/beta-1 provides a docking site for FAP (seprase) at invadopodia plasma membranes in a collagen-dependent manner and hence may participate in the adhesion, formation of invadopodia and matrix degradation processes, promoting cell invasion. Alpha-3/beta-1 may mediate with LGALS3 the stimulation by CSPG4 of endothelial cells migration. In Cricetulus griseus (Chinese hamster), this protein is Integrin alpha-3 (ITGA3).